Consider the following 854-residue polypeptide: pH-response regulator protein palA/prr-1 (854 aa).

The region spanning 5-402 (HVLSLPFRKS…SELESMTSQL (398 aa)) is the BRO1 domain. A coiled-coil region spans residues 632–699 (RLDRLYESEL…DAAYYKYKEI (68 aa)). Disordered stretches follow at residues 739–782 (EEEI…EPIQ) and 801–854 (PQQQ…IRFG). Positions 746–759 (PLSSLNMHQSSFSY) are enriched in polar residues. Over residues 767–782 (QPPPPPPQIPFPEPIQ) the composition is skewed to pro residues. A compositionally biased stretch (low complexity) spans 827–839 (QGQQHQQEQGQPG).

This sequence belongs to the palA/RIM20 family. As to quaternary structure, interacts with pacc-1 by binding to its two YPX[LI] motifs.

In terms of biological role, required for the proteolytic cleavage of the transcription factor pacc-1 in response to alkaline ambient pH. May act as a scaffold protein that recruits the calpain-like protease palB/cpr-8 via snf7/vps-3 to its substrate pacc-1. The polypeptide is pH-response regulator protein palA/prr-1 (prr-1) (Neurospora crassa (strain ATCC 24698 / 74-OR23-1A / CBS 708.71 / DSM 1257 / FGSC 987)).